A 193-amino-acid polypeptide reads, in one-letter code: Ion-translocating oxidoreductase complex subunit A (193 aa).

Helical transmembrane passes span 5–25, 39–59, 72–92, 102–122, 134–154, and 171–191; these read ILLIISTALINNFVLVKFLGL, IGMGLATMFVLTVASLCAYLV, LRTLIFILVIAVVVQFTEMVI, LLGIFLPLITTNCAVLGVALL, VIYGFSASLGFSLVLVLFAAL, and SIALITAGLMSLAFMGFSGLV.

This sequence belongs to the NqrDE/RnfAE family. As to quaternary structure, the complex is composed of six subunits: RnfA, RnfB, RnfC, RnfD, RnfE and RnfG.

It localises to the cell inner membrane. In terms of biological role, part of a membrane-bound complex that couples electron transfer with translocation of ions across the membrane. This is Ion-translocating oxidoreductase complex subunit A from Histophilus somni (strain 129Pt) (Haemophilus somnus).